We begin with the raw amino-acid sequence, 188 residues long: Transmembrane protein 160 (188 aa).

The N-terminal 96 residues, 1-96 (MGGGWWWARA…ISFMQSDMGR (96 aa)), are a transit peptide targeting the mitochondrion. The segment at 25–52 (PPRPRSGGARGSFAPGHGPRAGASPPPV) is disordered. Residues 29 to 38 (RSGGARGSFA) show a composition bias toward low complexity. A Phosphoserine modification is found at Ser48. Transmembrane regions (helical) follow at residues 102-122 (FFLL…VGLA) and 135-155 (AAAG…AVGL).

It belongs to the TMEM160 family.

The protein resides in the mitochondrion inner membrane. The polypeptide is Transmembrane protein 160 (Bos taurus (Bovine)).